The chain runs to 560 residues: Membrane-bound O-acyltransferase GUP1 (560 aa).

Residues 1 to 43 lie on the Extracellular side of the membrane; that stretch reads MSLISILSPLITSEGLDSRIKPSPKKDASTTTKPSLWKTTEFK. Residues 44 to 64 traverse the membrane as a helical segment; sequence FYYIAFLVVVPLMFYAGLQAS. Residues 65–101 lie on the Cytoplasmic side of the membrane; the sequence is SPENPNYARYERLLSQGWLFGRKVDNSDSQYRFFRDN. Residues 102–122 traverse the membrane as a helical segment; that stretch reads FALLSVLMLVHTSIKRIVLYS. The Extracellular portion of the chain corresponds to 123–131; it reads TNITKLRFD. The helical transmembrane segment at 132–152 threads the bilayer; it reads LIFGLIFLVAAHGVNSIRILA. At 153–165 the chain is on the cytoplasmic side; the sequence is HMLILYAIAHVLK. A helical transmembrane segment spans residues 166–185; the sequence is NFRRIATISIWIYGISTLFI. Over 186–276 the chain is Extracellular; sequence NDNFRAYPFG…AAHPIQDYSL (91 aa). The helical transmembrane segment at 277-297 threads the bilayer; the sequence is MNYIAYVTYTPLFIAGPIITF. Over 298–322 the chain is Cytoplasmic; it reads NDYVYQSKHTLPSINFKFIFYYAVR. Residues 323 to 343 traverse the membrane as a helical segment; the sequence is FVIALLSMEFILHFLHVVAIS. The Extracellular segment spans residues 344–352; it reads KTKAWENDT. The helical transmembrane segment at 353 to 373 threads the bilayer; that stretch reads PFQISMIGLFNLNIIWLKLLI. At 374 to 432 the chain is on the cytoplasmic side; the sequence is PWRLFRLWALLDGIDTPENMIRCVDNNYSSLAFWRAWHRSYNKWVVRYIYIPLGGSKNR. The next 2 helical transmembrane spans lie at 433-453 and 454-474; these read VLTS…ELKL and LLWG…TQIF. Residue histidine 447 is part of the active site. The Cytoplasmic portion of the chain corresponds to 475-485; that stretch reads SHYTDAVWYRH. A helical transmembrane segment spans residues 486 to 506; sequence VCAVGAVFNIWVMMIANLFGF. Over 507 to 526 the chain is Extracellular; the sequence is CLGSDGTKKLLSDMFCTVSG. Residues 527 to 547 traverse the membrane as a helical segment; the sequence is FKFVILASVSLFIAVQIMFEI. Residues 548–560 are Cytoplasmic-facing; it reads REEEKRHGIYLKC.

It belongs to the membrane-bound acyltransferase family. In terms of assembly, interacts with mitochondrial outer membrane voltage-dependent anion channel (VDAC) POR1.

It is found in the cell membrane. Its subcellular location is the endoplasmic reticulum membrane. The protein localises to the mitochondrion membrane. Functionally, membrane-bound O-acyltransferase involved in the remodeling of glycosylphosphatidylinositol (GPI) anchors. Acts only on GPI-anchored proteins, but not on free GPI lipids. Acts as an acyltransferase for GPI anchors that adds C26 fatty acids to the sn2 position of lyso-PI-containing GPI anchors. PER1 first deacylates, GUP1 subsequently reacylates the anchor lipid, thus replacing a shorter fatty acid (C16:0 or C18:0) by C26:0. Also involved in lipid metabolism, having profound effects on sphingolipid-sterol-ordered domains integrity and assembly. Together with GUP2, has an influence on the chemical composition of the yeast extracellular matrix (yECM) in yeast multicellular aggregates, such as biofilms and colonies. Involved in cell integrity and apoptosis. The chain is Membrane-bound O-acyltransferase GUP1 (GUP1) from Saccharomyces cerevisiae (strain ATCC 204508 / S288c) (Baker's yeast).